The following is a 504-amino-acid chain: ATP synthase subunit alpha (504 aa).

171–178 (GDRQTGKT) contacts ATP.

The protein belongs to the ATPase alpha/beta chains family. F-type ATPases have 2 components, CF(1) - the catalytic core - and CF(0) - the membrane proton channel. CF(1) has five subunits: alpha(3), beta(3), gamma(1), delta(1), epsilon(1). CF(0) has three main subunits: a(1), b(2) and c(9-12). The alpha and beta chains form an alternating ring which encloses part of the gamma chain. CF(1) is attached to CF(0) by a central stalk formed by the gamma and epsilon chains, while a peripheral stalk is formed by the delta and b chains.

The protein resides in the cell inner membrane. It catalyses the reaction ATP + H2O + 4 H(+)(in) = ADP + phosphate + 5 H(+)(out). Produces ATP from ADP in the presence of a proton gradient across the membrane. The alpha chain is a regulatory subunit. The chain is ATP synthase subunit alpha from Sulfurovum sp. (strain NBC37-1).